The chain runs to 448 residues: MGLSPVNIFKPFGLGRAKAVIAAVSGGSDSLGLLFLLKDYLSTLESPPVLIAVTVDHKLRAESALEAENVGLLCQKHGIMHCVLSWDDPKPAHGLAAAARTARYRLLVQAARDAGAGFIVTGHTENDQIETFLMRKARSGHCEARGLAAMSPRSLLEGSVKLARPLLTVSRQALRDELTRRGIAWVDDPSNANIDYERPRVRLGVAAEADGQEVLEQIAQAGAARERDNAALVEALADPATLGVDAAGMMFLNADCYAALSPGARQLFSGLLASIAGGRRFLPGDGERRRIERMLSGQDAPRRLTVFGALIERGEKGAPHRFRRERRNLPKLDLVPGQHIVWDGRFCFFNSGGRSFEIAPPGRQELIDFLKNSGRDIESRRCEALLISPALYEGGKLASVPFLPGAEWPQGVHIERHFAIFDHVLPGHDFALAQAVEARLGRACAEIS.

Residue 25-30 (SGGSDS) coordinates ATP.

It belongs to the tRNA(Ile)-lysidine synthase family.

Its subcellular location is the cytoplasm. The catalysed reaction is cytidine(34) in tRNA(Ile2) + L-lysine + ATP = lysidine(34) in tRNA(Ile2) + AMP + diphosphate + H(+). Its function is as follows. Ligates lysine onto the cytidine present at position 34 of the AUA codon-specific tRNA(Ile) that contains the anticodon CAU, in an ATP-dependent manner. Cytidine is converted to lysidine, thus changing the amino acid specificity of the tRNA from methionine to isoleucine. In Brucella suis biovar 1 (strain 1330), this protein is tRNA(Ile)-lysidine synthase.